We begin with the raw amino-acid sequence, 145 residues long: Deoxyuridine 5'-triphosphate nucleotidohydrolase (145 aa).

Residues 63–65 (RSG), Asn76, and 80–82 (TID) contribute to the substrate site.

The protein belongs to the dUTPase family. It depends on Mg(2+) as a cofactor.

The catalysed reaction is dUTP + H2O = dUMP + diphosphate + H(+). Its pathway is pyrimidine metabolism; dUMP biosynthesis; dUMP from dCTP (dUTP route): step 2/2. This enzyme is involved in nucleotide metabolism: it produces dUMP, the immediate precursor of thymidine nucleotides and it decreases the intracellular concentration of dUTP so that uracil cannot be incorporated into DNA. This is Deoxyuridine 5'-triphosphate nucleotidohydrolase from Chlamydia pneumoniae (Chlamydophila pneumoniae).